A 94-amino-acid chain; its full sequence is ATP-dependent Clp protease adapter protein ClpS (94 aa).

It belongs to the ClpS family. In terms of assembly, binds to the N-terminal domain of the chaperone ClpA.

Functionally, involved in the modulation of the specificity of the ClpAP-mediated ATP-dependent protein degradation. This Thermosynechococcus vestitus (strain NIES-2133 / IAM M-273 / BP-1) protein is ATP-dependent Clp protease adapter protein ClpS.